A 423-amino-acid polypeptide reads, in one-letter code: Gamma-glutamyl phosphate reductase (423 aa).

The protein belongs to the gamma-glutamyl phosphate reductase family.

Its subcellular location is the cytoplasm. The enzyme catalyses L-glutamate 5-semialdehyde + phosphate + NADP(+) = L-glutamyl 5-phosphate + NADPH + H(+). The protein operates within amino-acid biosynthesis; L-proline biosynthesis; L-glutamate 5-semialdehyde from L-glutamate: step 2/2. Catalyzes the NADPH-dependent reduction of L-glutamate 5-phosphate into L-glutamate 5-semialdehyde and phosphate. The product spontaneously undergoes cyclization to form 1-pyrroline-5-carboxylate. The polypeptide is Gamma-glutamyl phosphate reductase (Desulfovibrio desulfuricans (strain ATCC 27774 / DSM 6949 / MB)).